The sequence spans 274 residues: Probable starch degradation products transport system permease protein AmyC (274 aa).

6 helical membrane-spanning segments follow: residues 11 to 31, 73 to 93, 103 to 123, 139 to 159, 184 to 204, and 238 to 258; these read LTFL…IILV, LIIT…TAYA, VIIY…VMIP, LVFM…YGAL, IILP…IMWI, and WNLG…FYFL. The ABC transmembrane type-1 domain maps to 69–259; that stretch reads FSNTLIITVF…LPVVIFYFLA (191 aa).

It belongs to the binding-protein-dependent transport system permease family. MalFG subfamily.

The protein resides in the cell membrane. In terms of biological role, probably part of a binding-protein-dependent transport system starch degradation products. Probably responsible for the translocation of the substrate across the membrane. The polypeptide is Probable starch degradation products transport system permease protein AmyC (amyC) (Thermoanaerobacterium thermosulfurigenes (Clostridium thermosulfurogenes)).